A 1004-amino-acid polypeptide reads, in one-letter code: UPF0182 protein Mflv_4654 (1004 aa).

7 consecutive transmembrane segments (helical) span residues 18–38 (FLIA…RFID), 63–83 (LVIF…GLAL), 114–134 (LIGI…GQSY), 176–196 (FVGV…FGGI), 211–231 (IQLI…YWFD), 260–280 (KLIL…AIFL), and 288–308 (IGVV…PLVV). The segment covering 896 to 940 (PGADATATGPAATEPPAGQAPQTQGNNTAPPAAQPPNRQGQAPAG) has biased composition (low complexity). The segment at 896–960 (PGADATATGP…TGPTQLSAAK (65 aa)) is disordered.

Belongs to the UPF0182 family.

It is found in the cell membrane. This is UPF0182 protein Mflv_4654 from Mycolicibacterium gilvum (strain PYR-GCK) (Mycobacterium gilvum (strain PYR-GCK)).